We begin with the raw amino-acid sequence, 639 residues long: Threonine--tRNA ligase (639 aa).

The region spanning 1–61 is the TGS domain; it reads MIHITLPDGS…TADCRLSIIT (61 aa). The segment at 242 to 533 is catalytic; it reads DHRKLGRELD…LLEQHAGALP (292 aa). Zn(2+)-binding residues include Cys333, His384, and His510.

This sequence belongs to the class-II aminoacyl-tRNA synthetase family. In terms of assembly, homodimer. Zn(2+) serves as cofactor.

The protein resides in the cytoplasm. It catalyses the reaction tRNA(Thr) + L-threonine + ATP = L-threonyl-tRNA(Thr) + AMP + diphosphate + H(+). Its function is as follows. Catalyzes the attachment of threonine to tRNA(Thr) in a two-step reaction: L-threonine is first activated by ATP to form Thr-AMP and then transferred to the acceptor end of tRNA(Thr). Also edits incorrectly charged L-seryl-tRNA(Thr). The sequence is that of Threonine--tRNA ligase from Verminephrobacter eiseniae (strain EF01-2).